The following is a 334-amino-acid chain: Methionine adenosyltransferase 2 subunit beta (334 aa).

NADP(+)-binding positions include 37–40 (TGLL), 60–62 (FRR), 71–72 (NL), Cys93, Arg97, Tyr159, and Leu185. A Phosphothreonine modification is found at Thr309. The segment at 319 to 334 (LWPFLIDKRWRQTVFH) is required for interaction with MAT2A.

It belongs to the dTDP-4-dehydrorhamnose reductase family. MAT2B subfamily. Heterotrimer; composed of a catalytic MAT2A homodimer that binds one regulatory MAT2B chain. Heterohexamer; composed of a central, catalytic MAT2A homotetramer flanked on either side by a regulatory MAT2B chain. NADP binding increases the affinity for MAT2A.

The protein operates within amino-acid biosynthesis; S-adenosyl-L-methionine biosynthesis; S-adenosyl-L-methionine from L-methionine: step 1/1. In terms of biological role, regulatory subunit of S-adenosylmethionine synthetase 2, an enzyme that catalyzes the formation of S-adenosylmethionine from methionine and ATP. Regulates MAT2A catalytic activity by changing its kinetic properties, increasing its affinity for L-methionine. Can bind NADP (in vitro). This is Methionine adenosyltransferase 2 subunit beta (MAT2B) from Pongo abelii (Sumatran orangutan).